A 167-amino-acid polypeptide reads, in one-letter code: LIM domain transcription factor LMO4.1 (167 aa).

Polar residues predominate over residues 1-17 (MVNNRVTESTTTAVSSN). Residues 1–20 (MVNNRVTESTTTAVSSNGGP) form a disordered region. 2 LIM zinc-binding domains span residues 22–84 (KACA…LFGS) and 86–148 (GACS…GLLS).

Its function is as follows. Acts as a positive cofactor of GATA transcription factors to establish the identity of the ventral mesoderm during gastrulation. Down-regulation in the dorsal mesoderm is necessary for the proper formation of this territory since, when present, lmo4 may bind ldb1 and restrict the availability of this cofactor for Spemman organizer transcription factors. At neurula stages, suppresses primary neuron differentiation and modulates gene expression at the Isthmic Organizer of the midbrain-hindbrain boundary. The protein is LIM domain transcription factor LMO4.1 (lmo4.1) of Xenopus tropicalis (Western clawed frog).